Consider the following 445-residue polypeptide: Sterile alpha motif domain-containing protein 7 (445 aa).

A required for localization to nuclear polycomb bodies region spans residues 98-172 (HAARAEMEMY…HLQGNPILLA (75 aa)). Positions 193–282 (YQKPPESDTE…WDDGKGKPSE (90 aa)) are disordered. Over residues 227–244 (IKDPDIEVDNQQKPRVAD) the composition is skewed to basic and acidic residues. Residues 324-378 (WTVDDVYNFIRSLPGCSDYAQVFKDHAIDGETLPLLTEQHLRGTMGLKLGPALKI) form the SAM domain. Positions 425 to 445 (SIPGPQDLLSPKRTEQDVMRN) are disordered. Residues 434-445 (SPKRTEQDVMRN) are compositionally biased toward basic and acidic residues.

In terms of assembly, monomer, homodimer and homooligomer. Component of a Polycomb group (PcG) multiprotein PRC1-like complex. Interacts with PHC2 and NR2E3. Interacts with RNF1 in a PHC2-dependent manner. Interacts with SAMD11. In terms of tissue distribution, expressed in the retina and the pineal gland. In the retina, it is predominantly expressed in the outer nuclear layer and developing rod photoreceptors.

It localises to the nucleus. The protein localises to the cytoplasm. Functionally, component of a Polycomb group (PcG) multiprotein PRC1-like complex, essential for establishing rod photoreceptor cell identity and function by silencing nonrod gene expression in developing rod photoreceptor cells. Via its association with the PRC1-like complex, promotes epigenetic repressive marks H3K27me3 and H2AK119ub marks in nonrod genes, silencing their transcription. Represses Crx-controlled photoreceptor-specific gene expression. The chain is Sterile alpha motif domain-containing protein 7 (Samd7) from Mus musculus (Mouse).